A 157-amino-acid chain; its full sequence is Dihydrofolate reductase type 6 (157 aa).

The DHFR domain maps to 2–156 (KISLMAAVSE…IDYTYQIWAK (155 aa)).

It belongs to the dihydrofolate reductase family. Homodimer.

The catalysed reaction is (6S)-5,6,7,8-tetrahydrofolate + NADP(+) = 7,8-dihydrofolate + NADPH + H(+). It functions in the pathway cofactor biosynthesis; tetrahydrofolate biosynthesis; 5,6,7,8-tetrahydrofolate from 7,8-dihydrofolate: step 1/1. Key enzyme in folate metabolism. Catalyzes an essential reaction for de novo glycine and purine synthesis, and for DNA precursor synthesis. The polypeptide is Dihydrofolate reductase type 6 (dhfrVI) (Proteus mirabilis).